The following is a 376-amino-acid chain: Putative clathrin assembly protein At1g25240 (376 aa).

Positions 25–156 (KTSFRNPDLD…FFLSDQIRRR (132 aa)) constitute an ENTH domain.

It localises to the membrane. The protein localises to the clathrin-coated pit. The protein resides in the golgi apparatus. It is found in the cytoplasmic vesicle. Its subcellular location is the clathrin-coated vesicle. This chain is Putative clathrin assembly protein At1g25240, found in Arabidopsis thaliana (Mouse-ear cress).